Consider the following 1066-residue polypeptide: MNHDFQALALESRGMGELLPTKKFWEPDDSTKDGQKGIFLGDDEWRETAWGTSHHSMSQPIMVQRRSGQSFHGNSEVNAILSPRSESGGLGVSMVEYVLSSSPADKLDSRFRKGTFGTRDAETDGPEKGDQKGKASPFEEDQNRDLKQDDEDSKINGRGLPNGMDADCKDFNRTPGSRQASPTEVVERLGPSTNPPEGLGPLPNPTANKPLVEEFSNPETQNLDAMDQVGLDSLQFDYPGNQVPMDSSGATVGLFDYNSQQQLFQRTSALTVQQLTAAQQQQYALAAAQQPHIAGVFSAGLAPAAFVPNPYIISAAPPGTDPYTAAGLAAAATLAGPAVVPPQYYGVPWGVYPANLFQQQAAAAASNTANQQAASQAQPGQQQVLRPGAGQRPITPSQGQQGQQAESLAAAANPTLAFGQSLAAGMPGYQVLAPTAYYDQTGALVVGPGARTGLGAPVRLMAPTPVLISSTAAQAAAAAAAAGGTANSLTGSTNGLFRPIGTQPPQQQQQQQQPSTNLQSNSFYGSSSLTNSSQSSSLFSHGPGQPGSASLGFGSGSSLGAAIGSALSGFGSSVGSSASSSATRRESLSTSSDLYKRSSSSLAPIGQPFYNSLGFSSSPSPIGMPLPSQTPGHSLTPPPSLSSHGSSSSLHLGGLTNGSGRYISAAPGAEAKYRSASSTSSLFSSSSQLFPPSRLRYNRSDIMPSGRSRLLEDFRNNRFPNLQLRDLIGHIVEFSQDQHGSRFIQQKLERATPAERQIVFNEILQAAYQLMTDVFGNYVIQKFFEFGSLDQKLALATRIRGHVLPLALQMYGCRVIQKALESISSDQQVISEMVKELDGHVLKCVKDQNGNHVVQKCIECVQPQSLQFIIDAFKGQVFVLSTHPYGCRVIQRILEHCTAEQTLPILEELHQHTEQLVQDQYGNYVIQHVLEHGRPEDKSKIVSEIRGKVLALSQHKFASNVVEKCVTHASRAERALLIDEVCCQNDGPHSALYTMMKDQYANYVVQKMIDMAEPAQRKIIMHKIRPHITTLRKYTYGKHILAKLEKYYLKNSPDLGPIGGPPNGML.

Positions 1–260 are interaction with SNAPIN; the sequence is MNHDFQALAL…TVGLFDYNSQ (260 aa). 4 positions are modified to phosphoserine: Ser67, Ser70, Ser82, and Ser102. Disordered stretches follow at residues 106-203, 368-408, and 490-551; these read KLDS…GPLP, TANQ…AESL, and TGST…SASL. The span at 119-133 shows a compositional bias: basic and acidic residues; that stretch reads RDAETDGPEKGDQKG. A phosphoserine mark is found at Ser136, Ser177, and Ser181. Thr183 bears the Phosphothreonine mark. The span at 368 to 383 shows a compositional bias: low complexity; that stretch reads TANQQAASQAQPGQQQ. Residues 394–406 are compositionally biased toward polar residues; that stretch reads ITPSQGQQGQQAE. Thr395 bears the Phosphothreonine mark. The segment covering 503 to 514 has biased composition (low complexity); the sequence is QPPQQQQQQQQP. The span at 515–525 shows a compositional bias: polar residues; the sequence is STNLQSNSFYG. A compositionally biased stretch (low complexity) spans 526 to 540; sequence SSSLTNSSQSSSLFS. 2 positions are modified to phosphoserine: Ser587 and Ser592. The segment at 620 to 650 is disordered; it reads SPIGMPLPSQTPGHSLTPPPSLSSHGSSSSL. A compositionally biased stretch (low complexity) spans 630–650; sequence TPGHSLTPPPSLSSHGSSSSL. Position 674 is an omega-N-methylarginine (Arg674). Ser684 and Ser700 each carry phosphoserine. Residues 706-1048 form the PUM-HD domain; the sequence is GRSRLLEDFR…HILAKLEKYY (343 aa). 8 Pumilio repeats span residues 726 to 761, 762 to 797, 798 to 835, 836 to 871, 872 to 907, 908 to 943, 944 to 979, and 980 to 1022; these read DLIG…IVFN, EILQ…ALAT, RIRG…EMVK, ELDG…FIID, AFKG…PILE, ELHQ…KIVS, EIRG…LLID, and EVCC…IIMH. Positions 741–745 are adenine-nucleotide binding in RNA target; that stretch reads SRFIQ. A uracil-nucleotide binding in RNA target region spans residues 777–781; the sequence is NYVIQ. Residues 813-817 are adenine-nucleotide binding in RNA target; sequence CRVIQ. The interval 851–855 is non-specific-nucleotide binding in RNA target; sequence NHVVQ. The adenine-nucleotide binding in RNA target stretch occupies residues 887–891; the sequence is CRVIQ. The segment at 923–927 is uracil-nucleotide binding in RNA target; it reads NYVIQ. Residues 959–963 form a guanine-nucleotide binding in RNA target region; sequence SNVVE. The tract at residues 1002–1006 is uracil-nucleotide binding in RNA target; sequence NYVVQ.

As to quaternary structure, homodimer; homodimerizes in vitro. Interacts with DAZ1, DAZL and NANOS1 via its pumilio repeats. Interacts with NANOS3. Interacts with SNAPIN. Recruits the CCR4-POP2-NOT deadenylase leading to translational inhibition and mRNA degradation. Interacts with DDX20. In case of viral infection, interacts with DHX58. Widely expressed. Expressed in embryonic stem cells, heart, kidney, lung, skin, intestine, spleen and thymus. Expressed at intermediate level in brain and liver. Weakly or not expressed in muscles and stomach. Expressed at various stages of myeloid and lymphoid cell development. In the testis expressed in the spermatogoni, spermatocytes, spermatids and Sertoli cells.

The protein localises to the cytoplasm. Its subcellular location is the cytoplasmic granule. It is found in the perinuclear region. Functionally, sequence-specific RNA-binding protein that acts as a post-transcriptional repressor by binding the 3'-UTR of mRNA targets. Binds to an RNA consensus sequence, the Pumilio Response Element (PRE), 5'-UGUANAUA-3', that is related to the Nanos Response Element (NRE). Mediates post-transcriptional repression of transcripts via different mechanisms: acts via direct recruitment of the CCR4-POP2-NOT deadenylase leading to translational inhibition and mRNA degradation. Also mediates deadenylation-independent repression by promoting accessibility of miRNAs. Acts as a post-transcriptional repressor of E2F3 mRNAs by binding to its 3'-UTR and facilitating miRNA regulation. Plays a role in cytoplasmic sensing of viral infection. Represses a program of genes necessary to maintain genomic stability such as key mitotic, DNA repair and DNA replication factors. Its ability to repress those target mRNAs is regulated by the lncRNA NORAD (non-coding RNA activated by DNA damage) which, due to its high abundance and multitude of PUMILIO binding sites, is able to sequester a significant fraction of PUM1 and PUM2 in the cytoplasm. May regulate DCUN1D3 mRNA levels. May support proliferation and self-renewal of stem cells. Binds specifically to miRNA MIR199A precursor, with PUM1, regulates miRNA MIR199A expression at a postranscriptional level. The protein is Pumilio homolog 2 (Pum2) of Mus musculus (Mouse).